The sequence spans 778 residues: Degenerin deg-1 (778 aa).

At 1-82 (MSNHHSKTKK…IARNSFSKLM (82 aa)) the chain is on the cytoplasmic side. Residues 83 to 103 (WGLIIFSFLLMFAYQASKLIF) traverse the membrane as a helical segment. The Extracellular portion of the chain corresponds to 104 to 711 (KFSAHEKITD…LVNLIADFGG (608 aa)). The span at 154-165 (NAKTHSKSEGEK) shows a compositional bias: basic and acidic residues. 2 disordered regions span residues 154–180 (NAKT…DASQ) and 201–220 (SNKT…QRSI). 4 N-linked (GlcNAc...) asparagine glycosylation sites follow: N202, N209, N272, and N342. A compositionally biased stretch (low complexity) spans 346-369 (TSTTTTTTTTPPPTTTSTTTTTTT). Positions 346–380 (TSTTTTTTTTPPPTTTSTTTTTTTTPPPTTTARPN) are disordered. N-linked (GlcNAc...) asparagine glycans are attached at residues N473, N492, and N606. A helical membrane pass occupies residues 712 to 732 (HLGLWLGFSVITVMEVCVLLV). Over 733–778 (DMISLFFKSRHEEKLLRQSTKRKDVPEDKRQITVGSGRKSDAFVSI) the chain is Cytoplasmic.

It belongs to the amiloride-sensitive sodium channel (TC 1.A.6) family.

It localises to the membrane. Probable sodium channel subunit. Required by a subset of neurons. The polypeptide is Degenerin deg-1 (Caenorhabditis elegans).